Reading from the N-terminus, the 310-residue chain is MDNYTLLNEFILLGIPQTQGLETLLFVVFLFIYFFTLLGNSLIFTAIISSSTLHTPMYFFLGLLSVFDMLFPSVTCPKMLFYLSVRSPAISYKGCAAQLFFYHLLGSTEGCLYSVMAYDRYVAICHPLRYMLIMKPGVCVSLVIIAWLVGCLHATILTSLTFQLVYCASNQVDYFFCDLPAVLPLACTDSKLARKVGSINVGFLALMLLFSVCVSYVHIGVAILRIRSAEGRQKAFSTCSAHLTAILCAYGPVIIIYLQRTPNPLLGAVVQILNNIVSPMLNSLIYSLRNKEVKRSLRRVFQNITFHGQK.

Over 1–23 (MDNYTLLNEFILLGIPQTQGLET) the chain is Extracellular. Asn3 carries an N-linked (GlcNAc...) asparagine glycan. The chain crosses the membrane as a helical span at residues 24-44 (LLFVVFLFIYFFTLLGNSLIF). Over 45–55 (TAIISSSTLHT) the chain is Cytoplasmic. The helical transmembrane segment at 56–76 (PMYFFLGLLSVFDMLFPSVTC) threads the bilayer. Residues 77 to 95 (PKMLFYLSVRSPAISYKGC) are Extracellular-facing. Cys95 and Cys187 are disulfide-bonded. Residues 96-116 (AAQLFFYHLLGSTEGCLYSVM) traverse the membrane as a helical segment. Residues 117 to 136 (AYDRYVAICHPLRYMLIMKP) are Cytoplasmic-facing. The chain crosses the membrane as a helical span at residues 137–157 (GVCVSLVIIAWLVGCLHATIL). Over 158 to 202 (TSLTFQLVYCASNQVDYFFCDLPAVLPLACTDSKLARKVGSINVG) the chain is Extracellular. Residues 203-223 (FLALMLLFSVCVSYVHIGVAI) form a helical membrane-spanning segment. At 224–237 (LRIRSAEGRQKAFS) the chain is on the cytoplasmic side. A helical transmembrane segment spans residues 238–258 (TCSAHLTAILCAYGPVIIIYL). Residues 259 to 264 (QRTPNP) are Extracellular-facing. Residues 265-285 (LLGAVVQILNNIVSPMLNSLI) form a helical membrane-spanning segment. Residues 286-310 (YSLRNKEVKRSLRRVFQNITFHGQK) are Cytoplasmic-facing.

It belongs to the G-protein coupled receptor 1 family.

It is found in the cell membrane. Its function is as follows. Odorant receptor. This chain is Olfactory receptor 10N1, found in Mus musculus (Mouse).